We begin with the raw amino-acid sequence, 84 residues long: Metallothionein-like protein 2C (84 aa).

The protein belongs to the metallothionein superfamily. Type 15 family.

Its subcellular location is the cytoplasm. It localises to the cytosol. Functionally, metallothioneins have a high content of cysteine residues that bind various heavy metals. Acts as a reactive oxygen species (ROS) scavenger in the cytosol. Possesses superoxide anion and hydroxyl radical scavenging activities in vitro. Plays a role during root development, lateral root initiation and seed embryo germination, possibly by regulating levels of cytokinin. This chain is Metallothionein-like protein 2C (MT2C), found in Oryza sativa subsp. indica (Rice).